The primary structure comprises 127 residues: Small ribosomal subunit protein uS11 (127 aa).

The protein belongs to the universal ribosomal protein uS11 family. In terms of assembly, part of the 30S ribosomal subunit.

Its function is as follows. Located on the platform of the 30S subunit. The chain is Small ribosomal subunit protein uS11 from Halobacterium salinarum (strain ATCC 700922 / JCM 11081 / NRC-1) (Halobacterium halobium).